Reading from the N-terminus, the 883-residue chain is Lethal(3)malignant brain tumor-like protein 3 (883 aa).

The tract at residues methionine 1–tryptophan 64 is interaction with RBPJ. Required for transcription repressor activity on Notch target genes. The segment covering histidine 146 to arginine 156 has biased composition (basic and acidic residues). Positions histidine 146–glycine 223 are disordered. Acidic residues-rich tracts occupy residues aspartate 157 to aspartate 166 and aspartate 185 to methionine 194. MBT repeat units follow at residues tryptophan 232–proline 332, phenylalanine 340–proline 439, and phenylalanine 448–proline 543. The segment at leucine 549–glutamate 593 adopts a CCHHC-type; degenerate zinc-finger fold. The tract at residues isoleucine 595–glutamine 768 is disordered. The segment covering lysine 616 to proline 662 has biased composition (basic and acidic residues). Residue lysine 638 forms a Glycyl lysine isopeptide (Lys-Gly) (interchain with G-Cter in SUMO2) linkage. Composition is skewed to low complexity over residues threonine 663–glutamine 742 and glutamine 749–glutamine 768. Positions tryptophan 811–alanine 875 constitute an SAM domain.

As to quaternary structure, interacts with RNF2. Interacts (via SAM domain) with SAMD1 (via SAM domain); the interaction mediates L3MBTL3 binding to chromatin. Interacts with RBPJ; the interaction is required for L3MBTL3 localization to chromatin and is impaired the Notch-derived peptides containing the intracellular domain (NICD). Interacts (via SAM domain) with KDM1A. Interacts with DCAF5. Interacts with DNMT1. Interacts with E2F1. Interacts with SOX2. Interacts with SFMBT1. As to expression, detected in hematopoietic progenitor cells in fetal liver. Detected in adult bone marrow, heart, brain, spleen, lung, liver, kidney and testis.

The protein resides in the nucleus. Is a negative regulator of Notch target genes expression, required for RBPJ-mediated transcriptional repression. It recruits KDM1A to Notch-responsive elements and promotes KDM1A-mediated H3K4me demethylation. Involved in the regulation of ubiquitin-dependent degradation of a set of methylated non-histone proteins, including SOX2. It acts as an adapter recruiting the CRL4-DCAF5 E3 ubiquitin ligase complex to methylated target proteins. Also involved in the regulation of ubiquitin-dependent degradation of methylated DNMT1 and E2F1. Required for normal maturation of myeloid progenitor cells. This Mus musculus (Mouse) protein is Lethal(3)malignant brain tumor-like protein 3.